The sequence spans 134 residues: Small ribosomal subunit protein uS11 (134 aa).

Belongs to the universal ribosomal protein uS11 family. As to quaternary structure, part of the 30S ribosomal subunit. Interacts with proteins S7 and S18. Binds to IF-3.

Located on the platform of the 30S subunit, it bridges several disparate RNA helices of the 16S rRNA. Forms part of the Shine-Dalgarno cleft in the 70S ribosome. This is Small ribosomal subunit protein uS11 from Salinibacter ruber (strain DSM 13855 / M31).